We begin with the raw amino-acid sequence, 365 residues long: DNA replication and repair protein RecF (365 aa).

23–30 (GPNGIGKS) provides a ligand contact to ATP.

Belongs to the RecF family.

The protein resides in the cytoplasm. In terms of biological role, the RecF protein is involved in DNA metabolism; it is required for DNA replication and normal SOS inducibility. RecF binds preferentially to single-stranded, linear DNA. It also seems to bind ATP. This Parasynechococcus marenigrum (strain WH8102) protein is DNA replication and repair protein RecF.